Consider the following 521-residue polypeptide: Cytochrome b5 reductase 4 (521 aa).

Residue M1 is modified to N-acetylmethionine. Over residues M1 to V18 the composition is skewed to polar residues. The disordered stretch occupies residues M1 to P27. Residues L54–A130 enclose the Cytochrome b5 heme-binding domain. Heme-binding residues include H89 and H112. Residues P165–G256 enclose the CS domain. The FAD-binding FR-type domain occupies L273–S385. FAD is bound by residues D365–G380 and D392–L424.

The protein belongs to the flavoprotein pyridine nucleotide cytochrome reductase family. The cofactor is FAD. In terms of tissue distribution, widely expressed.

The protein resides in the endoplasmic reticulum. The catalysed reaction is 2 Fe(III)-[cytochrome b5] + NADH = 2 Fe(II)-[cytochrome b5] + NAD(+) + H(+). In terms of biological role, NADH-cytochrome b5 reductase involved in endoplasmic reticulum stress response pathway. Plays a critical role in protecting pancreatic beta-cells against oxidant stress, possibly by protecting the cell from excess buildup of reactive oxygen species (ROS). Reduces a variety of substrates in vitro, such as cytochrome c, feericyanide and methemoglobin. The chain is Cytochrome b5 reductase 4 from Homo sapiens (Human).